The chain runs to 524 residues: Probable cytochrome P450 12c1, mitochondrial (524 aa).

Cysteine 470 provides a ligand contact to heme.

Belongs to the cytochrome P450 family. Heme serves as cofactor.

It is found in the mitochondrion membrane. This chain is Probable cytochrome P450 12c1, mitochondrial (Cyp12c1), found in Drosophila melanogaster (Fruit fly).